Here is a 729-residue protein sequence, read N- to C-terminus: Polyribonucleotide nucleotidyltransferase (729 aa).

Residues D509 and D515 each coordinate Mg(2+). Positions 575-634 (PRVISVKIPVDKIGEVIGPKGKMINQIQADSGAEITVEDDGTIYIGAVDGPSAESARSAI) constitute a KH domain. The region spanning 646 to 718 (GERYLGTIVK…SRGKISLSPS (73 aa)) is the S1 motif domain.

The protein belongs to the polyribonucleotide nucleotidyltransferase family. The cofactor is Mg(2+).

The protein localises to the cytoplasm. The enzyme catalyses RNA(n+1) + phosphate = RNA(n) + a ribonucleoside 5'-diphosphate. Functionally, involved in mRNA degradation. Catalyzes the phosphorolysis of single-stranded polyribonucleotides processively in the 3'- to 5'-direction. This is Polyribonucleotide nucleotidyltransferase from Frankia casuarinae (strain DSM 45818 / CECT 9043 / HFP020203 / CcI3).